Reading from the N-terminus, the 357-residue chain is Protein BIG GRAIN 1-like A (357 aa).

Disordered stretches follow at residues 1-146 (MEIT…KELG) and 208-233 (SSTCSSASSFSRSCLSKTPSSSGKSK). Residues 75–87 (DFERSRRKTDFLR) are compositionally biased toward basic and acidic residues. 2 stretches are compositionally biased toward low complexity: residues 88-104 (HSNSSSSDSSGFSSSES) and 112-127 (KSSASPPSSSRQQPKP). The span at 129 to 139 (RTSSVDHSSAV) shows a compositional bias: polar residues. A compositionally biased stretch (low complexity) spans 208–223 (SSTCSSASSFSRSCLS).

The protein belongs to the BIG GRAIN 1 (BG1) plant protein family.

It localises to the cell membrane. Functionally, involved in auxin transport. Regulator of the auxin signaling pathway. In Arabidopsis thaliana (Mouse-ear cress), this protein is Protein BIG GRAIN 1-like A.